A 269-amino-acid chain; its full sequence is Surfeit locus protein 4 (269 aa).

5 helical membrane-spanning segments follow: residues 65 to 85 (LASSFVFLNLLGQLTGCVLVL), 92 to 112 (YACFGLFGIIALQTIAYSILW), 179 to 199 (FFSIIQNIVGTALMILVAIGF), 203 to 223 (LAALTLVVWLFAINVYFNAFW), and 242 to 262 (TMSVIGGLLLVVALGPGGVSM). Residues 266–269 (KKEW) carry the Di-lysine motif motif.

Belongs to the SURF4 family. In terms of assembly, found in a complex composed at least of SURF4, TMED2 and TMED10. May interact with LMAN1. Interacts with ZFYVE27 and with KIF5A in a ZFYVE27-dependent manner. Interacts with STING1. Interacts with SAR1B. Interacts with TMEM41B.

The protein localises to the endoplasmic reticulum membrane. It is found in the endoplasmic reticulum-Golgi intermediate compartment membrane. It localises to the golgi apparatus membrane. Its function is as follows. Endoplasmic reticulum cargo receptor that mediates the export of lipoproteins by recruiting cargos into COPII vesicles to facilitate their secretion. Acts as a cargo receptor for lipoproteins bearing both APOB and APOA1, thereby regulating lipoprotein delivery and the maintenance of lipid homeostasis. Synergizes with the GTPase SAR1B to mediate transport of circulating lipoproteins. Promotes the secretion of PCSK9. Also mediates the efficient secretion of erythropoietin (EPO). May also play a role in the maintenance of the architecture of the endoplasmic reticulum-Golgi intermediate compartment and of the Golgi. The sequence is that of Surfeit locus protein 4 from Mus musculus (Mouse).